A 448-amino-acid chain; its full sequence is Protein ECM7 (448 aa).

Topologically, residues 1 to 28 (MVMSRIRDTIARPFQNLTALEKVVQWLR) are cytoplasmic. A helical transmembrane segment spans residues 29–49 (LGTTLLIISFGLALTVGPLSS). The Extracellular portion of the chain corresponds to 50–204 (PRTLYMSRLD…MRSLKHKKAN (155 aa)). A helical membrane pass occupies residues 205–225 (VLHLLYAVISFQVCMLFFMIW). Topologically, residues 226–246 (YYYIKGRFMNALKERALVHIN) are cytoplasmic. Residues 247 to 267 (SLLSLVVFIGGLISSISLAWV) form a helical membrane-spanning segment. Topologically, residues 268–287 (NYTIQSRINTELEAFGFSYH) are extracellular. Residues 288–308 (LGVTWFALLWCFAGLISVSCL) form a helical membrane-spanning segment. Residues 309–448 (AWSGLEWCIS…VIKPSSALQF (140 aa)) are Cytoplasmic-facing. Polar residues-rich tracts occupy residues 351–363 (YSQRYPQRQSTSG) and 383–406 (VDLNSENDANTSLDHGNPTANISN). 2 disordered regions span residues 351 to 411 (YSQR…GKHE) and 427 to 448 (RSSNDSEESMQRVIKPSSALQF).

The protein resides in the membrane. May be involved in cell wall organization and biogenesis. This chain is Protein ECM7 (ECM7), found in Saccharomyces cerevisiae (strain ATCC 204508 / S288c) (Baker's yeast).